We begin with the raw amino-acid sequence, 750 residues long: Phosphoribosylformylglycinamidine synthase subunit PurL (750 aa).

Residue histidine 54 is part of the active site. Residues tyrosine 57 and lysine 101 each coordinate ATP. Glutamate 103 lines the Mg(2+) pocket. Substrate contacts are provided by residues 104 to 107 (SHNH) and arginine 126. The Proton acceptor role is filled by histidine 105. Aspartate 127 contacts Mg(2+). Glutamine 251 contacts substrate. Aspartate 279 is a Mg(2+) binding site. 323–325 (ESQ) provides a ligand contact to substrate. ATP contacts are provided by aspartate 509 and glycine 546. Residue asparagine 547 coordinates Mg(2+). Substrate is bound at residue serine 549.

This sequence belongs to the FGAMS family. In terms of assembly, monomer. Part of the FGAM synthase complex composed of 1 PurL, 1 PurQ and 2 PurS subunits.

It localises to the cytoplasm. It catalyses the reaction N(2)-formyl-N(1)-(5-phospho-beta-D-ribosyl)glycinamide + L-glutamine + ATP + H2O = 2-formamido-N(1)-(5-O-phospho-beta-D-ribosyl)acetamidine + L-glutamate + ADP + phosphate + H(+). The protein operates within purine metabolism; IMP biosynthesis via de novo pathway; 5-amino-1-(5-phospho-D-ribosyl)imidazole from N(2)-formyl-N(1)-(5-phospho-D-ribosyl)glycinamide: step 1/2. In terms of biological role, part of the phosphoribosylformylglycinamidine synthase complex involved in the purines biosynthetic pathway. Catalyzes the ATP-dependent conversion of formylglycinamide ribonucleotide (FGAR) and glutamine to yield formylglycinamidine ribonucleotide (FGAM) and glutamate. The FGAM synthase complex is composed of three subunits. PurQ produces an ammonia molecule by converting glutamine to glutamate. PurL transfers the ammonia molecule to FGAR to form FGAM in an ATP-dependent manner. PurS interacts with PurQ and PurL and is thought to assist in the transfer of the ammonia molecule from PurQ to PurL. The polypeptide is Phosphoribosylformylglycinamidine synthase subunit PurL (Cutibacterium acnes (strain DSM 16379 / KPA171202) (Propionibacterium acnes)).